The chain runs to 629 residues: Phosphomethylpyrimidine synthase (629 aa).

Residues 1 to 24 are disordered; sequence MSTKPKNAAHLSESAQVDSGSVQP. Positions 13 to 24 are enriched in polar residues; it reads ESAQVDSGSVQP. Substrate contacts are provided by residues N233, M262, Y291, H327, 347 to 349, 388 to 391, and E427; these read SRG and DGLR. Residue H431 coordinates Zn(2+). Substrate is bound at residue Y454. H495 lines the Zn(2+) pocket. 3 residues coordinate [4Fe-4S] cluster: C575, C578, and C583.

It belongs to the ThiC family. In terms of assembly, homodimer. Requires [4Fe-4S] cluster as cofactor.

It carries out the reaction 5-amino-1-(5-phospho-beta-D-ribosyl)imidazole + S-adenosyl-L-methionine = 4-amino-2-methyl-5-(phosphooxymethyl)pyrimidine + CO + 5'-deoxyadenosine + formate + L-methionine + 3 H(+). It functions in the pathway cofactor biosynthesis; thiamine diphosphate biosynthesis. Functionally, catalyzes the synthesis of the hydroxymethylpyrimidine phosphate (HMP-P) moiety of thiamine from aminoimidazole ribotide (AIR) in a radical S-adenosyl-L-methionine (SAM)-dependent reaction. This is Phosphomethylpyrimidine synthase from Pseudomonas syringae pv. tomato (strain ATCC BAA-871 / DC3000).